A 127-amino-acid chain; its full sequence is Calcium-binding protein PBP1 (127 aa).

A compositionally biased stretch (polar residues) spans 1 to 18 (MASPKSSTRPNQENQEPQ). The tract at residues 1–20 (MASPKSSTRPNQENQEPQFQ) is disordered. The EF-hand domain occupies 72–107 (LTDDDVRYMINEGDFDRDGALNQMEFCVLMFRLSPE). D85, D87, D89, and E96 together coordinate Ca(2+).

Interacts with PID.

Its function is as follows. Potential calcium sensor that binds calcium in vitro. The chain is Calcium-binding protein PBP1 (PBP1) from Arabidopsis thaliana (Mouse-ear cress).